The following is a 595-amino-acid chain: GPI mannosyltransferase 3 (595 aa).

10 consecutive transmembrane segments (helical) span residues 58–78, 85–105, 128–148, 185–207, 212–232, 235–255, 260–280, 289–309, 319–339, and 413–433; these read YAFP…GVAT, LAHA…GVAA, GPRV…VLLV, FFAT…LYHW, GLDV…FACL, PTNV…LVRS, LLLT…CANI, GVLL…LAAF, LLQS…GALL, and VQSL…VLNT.

Belongs to the glycosyltransferase 22 family. PIGB subfamily.

It is found in the endoplasmic reticulum membrane. It functions in the pathway glycolipid biosynthesis; glycosylphosphatidylinositol-anchor biosynthesis. Its function is as follows. Mannosyltransferase involved in glycosylphosphatidylinositol-anchor biosynthesis. Transfers the third mannose to Man2-GlcN-acyl-PI during GPI precursor assembly. The chain is GPI mannosyltransferase 3 (GPI10) from Eremothecium gossypii (strain ATCC 10895 / CBS 109.51 / FGSC 9923 / NRRL Y-1056) (Yeast).